The following is a 143-amino-acid chain: Cytochrome c-type biogenesis protein CcmE (143 aa).

Residues Met1–Lys8 lie on the Cytoplasmic side of the membrane. The chain crosses the membrane as a helical; Signal-anchor for type II membrane protein span at residues Leu9–Ala29. At Leu30–Gln143 the chain is on the periplasmic side. Residues His124 and Tyr128 each coordinate heme.

It belongs to the CcmE/CycJ family.

Its subcellular location is the cell inner membrane. Functionally, heme chaperone required for the biogenesis of c-type cytochromes. Transiently binds heme delivered by CcmC and transfers the heme to apo-cytochromes in a process facilitated by CcmF and CcmH. The sequence is that of Cytochrome c-type biogenesis protein CcmE from Legionella pneumophila (strain Corby).